The sequence spans 1368 residues: DNA-directed RNA polymerase subunit beta (1368 aa).

The protein belongs to the RNA polymerase beta chain family. As to quaternary structure, the RNAP catalytic core consists of 2 alpha, 1 beta, 1 beta' and 1 omega subunit. When a sigma factor is associated with the core the holoenzyme is formed, which can initiate transcription.

It catalyses the reaction RNA(n) + a ribonucleoside 5'-triphosphate = RNA(n+1) + diphosphate. DNA-dependent RNA polymerase catalyzes the transcription of DNA into RNA using the four ribonucleoside triphosphates as substrates. This chain is DNA-directed RNA polymerase subunit beta, found in Legionella pneumophila subsp. pneumophila (strain Philadelphia 1 / ATCC 33152 / DSM 7513).